Consider the following 75-residue polypeptide: Stewaprin-a (75 aa).

Residues M1–G24 form the signal peptide. The WAP domain maps to H27 to I72. Disulfide bonds link C34–C60, C43–C64, C47–C59, and C53–C68.

The protein belongs to the venom waprin family. Expressed by the venom gland.

It is found in the secreted. Its function is as follows. Damages membranes of susceptible bacteria. Has no hemolytic activity. Not toxic to mice. Does not inhibit the proteinases elastase and cathepsin G. The sequence is that of Stewaprin-a from Hoplocephalus stephensii (Stephens's banded snake).